We begin with the raw amino-acid sequence, 336 residues long: Di/tripeptide transport system permease protein DppB (336 aa).

Helical transmembrane passes span 10–30, 102–122, 145–165, 198–218, 257–277, and 307–327; these read GLLI…IRLI, LSLA…VIAA, IFWW…WTPV, AVRH…AVIA, LIPV…GAVL, and ILLV…LYGL. Residues 96–325 form the ABC transmembrane type-1 domain; the sequence is FPATLELSLA…LVNFVVDILY (230 aa).

The protein belongs to the binding-protein-dependent transport system permease family. OppBC subfamily. As to quaternary structure, the complex is composed of two ATP-binding proteins (DppD and DppF), two transmembrane proteins (DppB and DppC) and a solute-binding protein (DppA1-A5). Five orthologous SBPs (DppA1-A5) are present in P.aeruginosa, which increases the substrate specificity of the DppBCDF transporter.

The protein resides in the cell inner membrane. In terms of biological role, part of the ABC transporter DppABCDF involved in the uptake of various di/tripeptides. Is also involved in the uptake of phaseolotoxin, a toxic tripeptide inhibiting the enzyme ornithine carbamoyltransferase. Responsible for the translocation of the substrate across the membrane. This is Di/tripeptide transport system permease protein DppB from Pseudomonas aeruginosa (strain UCBPP-PA14).